The sequence spans 572 residues: Na(+)/citrate cotransporter (572 aa).

The next 8 membrane-spanning stretches (helical) occupy residues 13–33, 53–73, 80–100, 124–144, 218–238, 255–275, 315–335, and 357–377; these read SFVI…LVPD, VIPV…LKVL, VQYM…ATAV, LMLG…NTAT, AASI…VLLG, SWFA…WLWL, PLSY…ILWF, and HVTD…VPSQ. N-linked (GlcNAc...) asparagine glycosylation occurs at N382. Transmembrane regions (helical) follow at residues 410–430, 443–463, 491–511, and 532–552; these read VPWG…GCET, PLSS…VAMT, PLYV…LPVA, and TGLV…NTWG. N566 carries N-linked (GlcNAc...) asparagine glycosylation.

This sequence belongs to the SLC13A/DASS transporter (TC 2.A.47) family. NADC subfamily. Homodimer. As to expression, expressed in liver, testis and brain.

The protein localises to the cell membrane. It carries out the reaction citrate(out) + 4 Na(+)(out) = citrate(in) + 4 Na(+)(in). Inhibited by Li(+). Functionally, high-affinity sodium/citrate cotransporter that mediates citrate entry into cells, which is a critical participant of biochemical pathways. May function in various metabolic processes in which citrate has a critical role such as energy production (Krebs cycle), fatty acid synthesis, cholesterol synthesis, glycolysis, and gluconeogenesis. Transports citrate into the cell in a Na(+)-dependent manner, recognizing the trivalent form of citrate (physiological pH) rather than the divalent form. Can recognize succinate as a substrate, but its affinity for succinate is several fold lower than for citrate. The stoichiometry is probably 4 Na(+) for each carboxylate, irrespective of whether the translocated substrate is divalent or trivalent, rendering the process electrogenic. Involved in the regulation of citrate levels in the brain. This chain is Na(+)/citrate cotransporter (Slc13a5), found in Rattus norvegicus (Rat).